The following is a 188-amino-acid chain: Elongation factor P (188 aa).

Belongs to the elongation factor P family.

The protein localises to the cytoplasm. It participates in protein biosynthesis; polypeptide chain elongation. In terms of biological role, involved in peptide bond synthesis. Stimulates efficient translation and peptide-bond synthesis on native or reconstituted 70S ribosomes in vitro. Probably functions indirectly by altering the affinity of the ribosome for aminoacyl-tRNA, thus increasing their reactivity as acceptors for peptidyl transferase. The protein is Elongation factor P of Rickettsia typhi (strain ATCC VR-144 / Wilmington).